Here is a 207-residue protein sequence, read N- to C-terminus: Guanylate kinase (207 aa).

A Guanylate kinase-like domain is found at 4–184; that stretch reads GTLYIVSAPS…ALMDFKAIIR (181 aa). 11–18 is a binding site for ATP; that stretch reads APSGAGKS.

This sequence belongs to the guanylate kinase family.

It is found in the cytoplasm. It carries out the reaction GMP + ATP = GDP + ADP. The catalysed reaction is dZMP + ATP = dZDP + ADP. The protein operates within purine metabolism. In terms of biological role, essential for recycling GMP and indirectly, cGMP. Functionally, (Microbial infection) Catalyzes the phosphorylation of dZMP to dZDP, when the bacterium is infected by a phage that produces the substrate for the synthesis of dZTP (2- amino-2'-deoxyadenosine 5'-triphosphate), which is then used by the phage as a DNA polymerase substrate. In Vibrio cholerae serotype O1 (strain ATCC 39315 / El Tor Inaba N16961), this protein is Guanylate kinase (gmk).